Here is a 614-residue protein sequence, read N- to C-terminus: Allergen Ara h 1, clone P17 (614 aa).

A signal peptide spans 1 to 25 (MRGRVSPLMLLLGILVLASVSATQA). Disordered regions lie at residues 72–177 (DTGA…RRFS), 334–356 (NAGGEQEERGQRRRSTRSSDNEG), 372–397 (HAKSVSKKGSEEEDITNPINLRDGEP), and 464–491 (KEQQQRGRREQEWEEEEEDEEEEGSNRE). Residues 81 to 132 (PPGERTRGRQPGDYDDDRRQPRREEGGRWGPAEPREREREEDWRQPREDWRR) show a composition bias toward basic and acidic residues. Residues 169–327 (FYFPSRRFST…AFNAEFNEIR (159 aa)) enclose the Cupin type-1 1 domain. The Cupin type-1 2 domain maps to 390–566 (INLRDGEPDL…AFPGSGEQVE (177 aa)). Basic and acidic residues predominate over residues 464–474 (KEQQQRGRREQ). The segment covering 475-486 (EWEEEEEDEEEE) has biased composition (acidic residues). N516 is a glycosylation site (N-linked (GlcNAc...) asparagine). Residues 572 to 614 (QRESHFVSARPQSQSPSSPEKEDQEEENQGGKGPLLSILKAFN) form a disordered region.

The protein belongs to the 7S seed storage protein family.

The protein is Allergen Ara h 1, clone P17 of Arachis hypogaea (Peanut).